The following is a 37-amino-acid chain: Kappa-actitoxin-Bcs3b (37 aa).

A ShKT domain is found at 2–37; it reads CKDGFPTATCQHAKLVGNCKNSQKYRANCAKTCGPC. 3 disulfides stabilise this stretch: Cys-2-Cys-37, Cys-11-Cys-30, and Cys-20-Cys-34. The crucial for binding to potassium channels stretch occupies residues 25–26; the sequence is KY.

Belongs to the sea anemone type 1 potassium channel toxin family. Type 1b subfamily.

It localises to the secreted. The protein resides in the nematocyst. Its function is as follows. Inhibits voltage-gated potassium channels (IC(50)=14.42 nM for rKCNA1/Kv1.1, IC(50)=80.4 nM for rKCNA2/Kv1.2, IC(50)=7.76 nM for rKCNA6/Kv1.6, IC(50)=13.12 nM for hKCNA3/Kv1.3, and IC(50)=49.14 nM for insect Shaker IR). Binds the Shaker IR channels in a voltage-independent manner. This Bunodosoma caissarum (Sea anemone) protein is Kappa-actitoxin-Bcs3b.